The chain runs to 103 residues: Urease subunit beta (103 aa).

Belongs to the urease beta subunit family. In terms of assembly, heterotrimer of UreA (gamma), UreB (beta) and UreC (alpha) subunits. Three heterotrimers associate to form the active enzyme.

It is found in the cytoplasm. It catalyses the reaction urea + 2 H2O + H(+) = hydrogencarbonate + 2 NH4(+). The protein operates within nitrogen metabolism; urea degradation; CO(2) and NH(3) from urea (urease route): step 1/1. This Blochmanniella floridana protein is Urease subunit beta.